The following is a 270-amino-acid chain: Elongation factor Ts (270 aa).

The interval 81–84 is involved in Mg(2+) ion dislocation from EF-Tu; the sequence is TDFV.

This sequence belongs to the EF-Ts family.

Its subcellular location is the cytoplasm. Its function is as follows. Associates with the EF-Tu.GDP complex and induces the exchange of GDP to GTP. It remains bound to the aminoacyl-tRNA.EF-Tu.GTP complex up to the GTP hydrolysis stage on the ribosome. In Wigglesworthia glossinidia brevipalpis, this protein is Elongation factor Ts.